Here is a 96-residue protein sequence, read N- to C-terminus: MRKYEIMYIIRPGVEEEAQKALVERFAGVLTNNGAEIINTKEWGKRRLAYEINDLREGFYMILNVNSNSEAINEFDRLAKINEDILRHIVVKEEEK.

This sequence belongs to the bacterial ribosomal protein bS6 family.

Binds together with bS18 to 16S ribosomal RNA. The polypeptide is Small ribosomal subunit protein bS6 (Bacillus mycoides (strain KBAB4) (Bacillus weihenstephanensis)).